Reading from the N-terminus, the 459-residue chain is Serine carboxypeptidase-like 27 (459 aa).

Positions 1-20 are cleaved as a signal peptide; it reads MDYSFLLIILLLTISTSCCA. Cystine bridges form between cysteine 91–cysteine 344, cysteine 252–cysteine 264, and cysteine 288–cysteine 312. Asparagine 142 is a glycosylation site (N-linked (GlcNAc...) asparagine). Serine 184 is an active-site residue. N-linked (GlcNAc...) asparagine glycans are attached at residues asparagine 289 and asparagine 333. Catalysis depends on residues aspartate 381 and histidine 433.

It belongs to the peptidase S10 family. In terms of tissue distribution, ubiquitous.

Its subcellular location is the secreted. Probable carboxypeptidase. In Arabidopsis thaliana (Mouse-ear cress), this protein is Serine carboxypeptidase-like 27 (SCPL27).